The chain runs to 369 residues: Hsc70-interacting protein (369 aa).

The tract at residues 38-97 is disordered; that stretch reads MGGKVPPATQKAKSEENTKEEKPDSKKVEEDLKADEPSSEESDLEIDKEGVIEPDTDAPQ. Basic and acidic residues predominate over residues 49-73; the sequence is AKSEENTKEEKPDSKKVEEDLKADE. 3 TPR repeats span residues 114 to 147, 148 to 181, and 182 to 215; these read ANDK…NPRL, AILY…NPDS, and AQPY…DYDE. Residues 256–272 are compositionally biased toward basic and acidic residues; that stretch reads KAREEHERAQREEEARR. The segment at 256 to 300 is disordered; the sequence is KAREEHERAQREEEARRQSGAQYGSFPGGFPGGMPGNFPGGMPGM. Positions 281-300 are enriched in gly residues; sequence FPGGFPGGMPGNFPGGMPGM. The STI1 domain occupies 319 to 358; sequence DPEVLAAMQDPEVMVAFQDVAQNPANMSKYQSNPKVMNLI. Ser-346 bears the Phosphoserine; by GRK5 mark. N6-acetyllysine is present on residues Lys-353 and Lys-360.

This sequence belongs to the FAM10 family. As to quaternary structure, homotetramer. Interacts with HSC70 as well as DNAJ homologs and HSP90. Interacts (via the C-terminus 303- 319 AA) with GRK5.

The protein resides in the cytoplasm. Its function is as follows. One HIP oligomer binds the ATPase domains of at least two HSC70 molecules dependent on activation of the HSC70 ATPase by HSP40. Stabilizes the ADP state of HSC70 that has a high affinity for substrate protein. Through its own chaperone activity, it may contribute to the interaction of HSC70 with various target proteins. This chain is Hsc70-interacting protein (ST13), found in Homo sapiens (Human).